The following is a 245-amino-acid chain: MYPVDLHMHTVASTHAYSTLSDYIAQAKRKGIKLFSITDHGPDMADAPHHWHFINMRIWPRIVDGVGILRGIEANIKNTEGEIDCFGQMYDSLDLIIAGFHEPVFAPHDKATNTQAMIATIASGNVHIISHPGNPKYPIDIMAVAEAAAKHQVALEINNSSFIHSRKGSEDNCRAVAAAVRDAGGWIALGSDSHTAYTLGEFDEALKIIEAVDFPEDRILNVSPARMLGFLESRGMTPIAEFAEL.

The Zn(2+) site is built by His-7, His-9, His-15, His-40, Glu-73, His-101, His-131, Asp-192, and His-194.

It belongs to the PHP family. In terms of assembly, homotrimer. It depends on Zn(2+) as a cofactor.

The polypeptide is Probable phosphatase YcdX (Escherichia fergusonii (strain ATCC 35469 / DSM 13698 / CCUG 18766 / IAM 14443 / JCM 21226 / LMG 7866 / NBRC 102419 / NCTC 12128 / CDC 0568-73)).